Reading from the N-terminus, the 70-residue chain is uncharacterized protein (70 aa).

The segment at 21 to 43 (YECPICGEIYIKRKSMITHLRKH) adopts a C2H2-type zinc-finger fold.

This is an uncharacterized protein from Saccharolobus islandicus (Sulfolobus islandicus).